The primary structure comprises 175 residues: Sec-independent protein translocase protein TatB (175 aa).

The chain crosses the membrane as a helical span at residues 1–21 (MLDLGLSKMALIGVVALVVLG). Residues 155–175 (SGAARVARHQPASLRRPTRFF) are disordered.

This sequence belongs to the TatB family. In terms of assembly, the Tat system comprises two distinct complexes: a TatABC complex, containing multiple copies of TatA, TatB and TatC subunits, and a separate TatA complex, containing only TatA subunits. Substrates initially bind to the TatABC complex, which probably triggers association of the separate TatA complex to form the active translocon.

Its subcellular location is the cell inner membrane. Its function is as follows. Part of the twin-arginine translocation (Tat) system that transports large folded proteins containing a characteristic twin-arginine motif in their signal peptide across membranes. Together with TatC, TatB is part of a receptor directly interacting with Tat signal peptides. TatB may form an oligomeric binding site that transiently accommodates folded Tat precursor proteins before their translocation. The chain is Sec-independent protein translocase protein TatB from Burkholderia lata (strain ATCC 17760 / DSM 23089 / LMG 22485 / NCIMB 9086 / R18194 / 383).